A 161-amino-acid polypeptide reads, in one-letter code: Lectin-like protein EP153R (161 aa).

Topologically, residues M1–Y30 are cytoplasmic. Residues I31–W51 form a helical membrane-spanning segment. The Extracellular portion of the chain corresponds to E52–K161. Cysteines 66 and 77 form a disulfide. Residues C66–S160 form a lectin-like region. N89, N98, N104, N110, N116, N130, and N136 each carry an N-linked (GlcNAc...) asparagine; by host glycan. Residues C94 and C159 are joined by a disulfide bond.

This sequence belongs to the asfivirus lectin-like protein family. In terms of assembly, homodimer.

The protein localises to the host endoplasmic reticulum membrane. Its function is as follows. Down-regulates MHC-I expression by impairing the appropriate configuration or presentation into the plasma membrane of the latter. Participates in viral hemadsorption, which may help viral spread. Reduces the transactivating activity of host TP53, thus inhibiting apoptosis. Non-essential for virus growth in swine macrophage cell cultures. The protein is Lectin-like protein EP153R of African swine fever virus (isolate Tick/Malawi/Lil 20-1/1983) (ASFV).